The sequence spans 168 residues: Disulfide bond formation protein B (168 aa).

The Cytoplasmic portion of the chain corresponds to 1-13 (MFLTYFDAMPRRV). A helical transmembrane segment spans residues 14-30 (LALVSLACVALLAFGLY). Residues 31–48 (LQHVVGLEPCPMCIVQRY) lie on the Periplasmic side of the membrane. A disulfide bridge links Cys40 with Cys43. The helical transmembrane segment at 49–64 (ALVLVAVVAGITAVAK) threads the bilayer. The Cytoplasmic segment spans residues 65-70 (SRGLLI). The chain crosses the membrane as a helical span at residues 71–88 (TGSGLLVLLSGFGAFVAA). Over 89–144 (RQSFLQWYPPEVASCGRDFYGMIETFPLKRAIPMIFKGSGDCTKIDWTFLGLSIAN) the chain is Periplasmic. A disulfide bridge links Cys103 with Cys130. Residues 145-163 (WSFLCFVAIALVGLVLITR) form a helical membrane-spanning segment. Residues 164 to 168 (LARQR) lie on the Cytoplasmic side of the membrane.

This sequence belongs to the DsbB family.

Its subcellular location is the cell inner membrane. Functionally, required for disulfide bond formation in some periplasmic proteins. Acts by oxidizing the DsbA protein. This chain is Disulfide bond formation protein B, found in Polaromonas sp. (strain JS666 / ATCC BAA-500).